Consider the following 220-residue polypeptide: Ribosome assembly protein 3 (220 aa).

The tract at residues M1–E91 is disordered. The segment covering S13–R24 has biased composition (basic residues). The span at S29–S39 shows a compositional bias: low complexity. The segment covering E41–E72 has biased composition (basic and acidic residues). Positions D73–E91 are enriched in acidic residues. A Phosphoserine modification is found at S83. Residue T88 is modified to Phosphothreonine. At S99 the chain carries Phosphoserine.

The protein belongs to the RSA3 family. In terms of assembly, associates with nucleolar pre-ribosomal particles. Interacts with DBP6. Together with DBP6, NOP8, URB1 and URB2, forms an RNA-independent complex, which is required during early maturation of nascent 60S ribosomal subunits.

Its subcellular location is the nucleus. It localises to the nucleolus. Its function is as follows. Required for efficient biogenesis of the 60S ribosomal subunit. This chain is Ribosome assembly protein 3 (RSA3), found in Saccharomyces cerevisiae (strain ATCC 204508 / S288c) (Baker's yeast).